We begin with the raw amino-acid sequence, 430 residues long: Histidine--tRNA ligase (430 aa).

The protein belongs to the class-II aminoacyl-tRNA synthetase family. As to quaternary structure, homodimer.

Its subcellular location is the cytoplasm. It catalyses the reaction tRNA(His) + L-histidine + ATP = L-histidyl-tRNA(His) + AMP + diphosphate + H(+). This is Histidine--tRNA ligase (hisS) from Chlamydia pneumoniae (Chlamydophila pneumoniae).